We begin with the raw amino-acid sequence, 272 residues long: 5'-AMP-activated protein kinase subunit beta-2 (272 aa).

Residues 1-52 (MGNTTSDRVSGERHGAKAARSEGAGGHAPGKEHKIMVGSTDDPSVFSLPDSK) form a disordered region. Ser39 carries the post-translational modification Phosphoserine. Residue Thr40 is modified to Phosphothreonine. Ser69 is modified (phosphoserine; by ULK1). 2 positions are modified to phosphoserine: Ser95 and Ser108. A Phosphothreonine modification is found at Thr148. Residues Ser158, Ser170, Ser174, and Ser184 each carry the phosphoserine modification.

This sequence belongs to the 5'-AMP-activated protein kinase beta subunit family. In terms of assembly, AMPK is a heterotrimer of an alpha catalytic subunit (PRKAA1 or PRKAA2), a beta (PRKAB1 or PRKAB2) and a gamma non-catalytic subunits (PRKAG1, PRKAG2 or PRKAG3). Phosphorylated when associated with the catalytic subunit (PRKAA1 or PRKAA2). Phosphorylated by ULK1 and ULK2; leading to negatively regulate AMPK activity and suggesting the existence of a regulatory feedback loop between ULK1, ULK2 and AMPK.

Functionally, non-catalytic subunit of AMP-activated protein kinase (AMPK), an energy sensor protein kinase that plays a key role in regulating cellular energy metabolism. In response to reduction of intracellular ATP levels, AMPK activates energy-producing pathways and inhibits energy-consuming processes: inhibits protein, carbohydrate and lipid biosynthesis, as well as cell growth and proliferation. AMPK acts via direct phosphorylation of metabolic enzymes, and by longer-term effects via phosphorylation of transcription regulators. Also acts as a regulator of cellular polarity by remodeling the actin cytoskeleton; probably by indirectly activating myosin. Beta non-catalytic subunit acts as a scaffold on which the AMPK complex assembles, via its C-terminus that bridges alpha (PRKAA1 or PRKAA2) and gamma subunits (PRKAG1, PRKAG2 or PRKAG3). The chain is 5'-AMP-activated protein kinase subunit beta-2 (PRKAB2) from Homo sapiens (Human).